A 360-amino-acid chain; its full sequence is uncharacterized protein (360 aa).

One can recognise an ABC transporter domain in the interval 4–235 (LSLQHIQKIY…PANMFVSGFI (232 aa)). 37–44 (GPSGCGKS) is an ATP binding site.

This sequence belongs to the ABC transporter superfamily.

This is an uncharacterized protein from Escherichia coli (strain K12).